Reading from the N-terminus, the 130-residue chain is MAKTANKINIRKVKRKTPKAIIHVQASFNNTIVTVTDVQGQVISSCSAGACGFKGAKKNTPFAAQTAAENAIRLLIDQGLKQAEVMISGPGRGRDTALRAIRNSGITLSLVRDVTPLPHNGCRRPKTRRV.

It belongs to the universal ribosomal protein uS11 family. As to quaternary structure, part of the 30S ribosomal subunit.

It is found in the plastid. Its subcellular location is the chloroplast. The chain is Small ribosomal subunit protein uS11c from Spirogyra maxima (Green alga).